Consider the following 752-residue polypeptide: Putative xanthine dehydrogenase molybdenum-binding subunit XdhA (752 aa).

Residues Q206, F237, R350, and A516 each contribute to the Mo-molybdopterin site.

It belongs to the xanthine dehydrogenase family. As to quaternary structure, heterotrimer of XdhA, XdhB and XdhC. Mo-molybdopterin is required as a cofactor.

It carries out the reaction xanthine + NAD(+) + H2O = urate + NADH + H(+). It catalyses the reaction hypoxanthine + NAD(+) + H2O = xanthine + NADH + H(+). It functions in the pathway purine metabolism; hypoxanthine degradation; urate from hypoxanthine: step 1/2. Its pathway is purine metabolism; hypoxanthine degradation; urate from hypoxanthine: step 2/2. Presumed to be a dehydrogenase, but possibly an oxidase. Participates in limited purine salvage (requires aspartate) but does not support aerobic growth on purines as the sole carbon source (purine catabolism). Deletion results in increased adenine sensitivity, suggesting that this protein contributes to the conversion of adenine to guanine nucleotides during purine salvage. The sequence is that of Putative xanthine dehydrogenase molybdenum-binding subunit XdhA (xdhA) from Escherichia coli (strain K12).